We begin with the raw amino-acid sequence, 95 residues long: Putative septation protein SpoVG (95 aa).

It belongs to the SpoVG family.

Functionally, could be involved in septation. This chain is Putative septation protein SpoVG, found in Clostridium botulinum (strain ATCC 19397 / Type A).